Reading from the N-terminus, the 421-residue chain is Transcription factor rglT (421 aa).

A disordered region spans residues 1–29 (MQYEAYQWGQSHPTSTSGSMLQDTPTAAS). A compositionally biased stretch (polar residues) spans 8 to 29 (WGQSHPTSTSGSMLQDTPTAAS). The zn(2)-C6 fungal-type DNA-binding region spans 38–65 (CDECRKRKLKCSGEISGCSRCIKQSLSC). Residues 346 to 357 (EARQRRWHESPD) are compositionally biased toward basic and acidic residues. Positions 346–371 (EARQRRWHESPDSHPLPPDQRLNIPS) are disordered.

The protein resides in the nucleus. In terms of biological role, transcription factor that is important for oxidative stress resistance and essential for gliotoxin (GT) self-protection through the regulation of a gene encoding a putative gliT homolog, even if E.nidulans does not produce gliotoxin itself. This chain is Transcription factor rglT, found in Emericella nidulans (strain FGSC A4 / ATCC 38163 / CBS 112.46 / NRRL 194 / M139) (Aspergillus nidulans).